The primary structure comprises 168 residues: Xanthine-guanine phosphoribosyltransferase (168 aa).

5-phospho-alpha-D-ribose 1-diphosphate is bound by residues 43–44 (RG) and 102–110 (DDLVDTGAT). Position 103 (Asp103) interacts with Mg(2+). Positions 106 and 149 each coordinate guanine. Positions 106 and 149 each coordinate xanthine. Residues 106 to 110 (DTGAT) and 148 to 149 (WI) each bind GMP.

The protein belongs to the purine/pyrimidine phosphoribosyltransferase family. XGPT subfamily. Homotetramer. Mg(2+) is required as a cofactor.

It localises to the cell inner membrane. It carries out the reaction GMP + diphosphate = guanine + 5-phospho-alpha-D-ribose 1-diphosphate. The enzyme catalyses XMP + diphosphate = xanthine + 5-phospho-alpha-D-ribose 1-diphosphate. It catalyses the reaction IMP + diphosphate = hypoxanthine + 5-phospho-alpha-D-ribose 1-diphosphate. Its pathway is purine metabolism; GMP biosynthesis via salvage pathway; GMP from guanine: step 1/1. The protein operates within purine metabolism; XMP biosynthesis via salvage pathway; XMP from xanthine: step 1/1. Purine salvage pathway enzyme that catalyzes the transfer of the ribosyl-5-phosphate group from 5-phospho-alpha-D-ribose 1-diphosphate (PRPP) to the N9 position of the 6-oxopurines guanine and xanthine to form the corresponding ribonucleotides GMP (guanosine 5'-monophosphate) and XMP (xanthosine 5'-monophosphate), with the release of PPi. To a lesser extent, also acts on hypoxanthine. This Nitrobacter hamburgensis (strain DSM 10229 / NCIMB 13809 / X14) protein is Xanthine-guanine phosphoribosyltransferase.